Here is a 267-residue protein sequence, read N- to C-terminus: Diphthine--ammonia ligase (267 aa).

Position 97 is a phosphotyrosine (Y97).

This sequence belongs to the Diphthine--ammonia ligase family.

The catalysed reaction is diphthine-[translation elongation factor 2] + NH4(+) + ATP = diphthamide-[translation elongation factor 2] + AMP + diphosphate + H(+). The protein operates within protein modification; peptidyl-diphthamide biosynthesis. In terms of biological role, amidase that catalyzes the last step of diphthamide biosynthesis using ammonium and ATP. Diphthamide biosynthesis consists in the conversion of an L-histidine residue in the translation elongation factor eEF-2 (EEF2) to diphthamide. The sequence is that of Diphthine--ammonia ligase (DPH6) from Bos taurus (Bovine).